The chain runs to 117 residues: Putative cysteine proteinase inhibitor 7 (117 aa).

The first 24 residues, 1-24 (MTMRTSSLLLAAVAVVAIVAGATA), serve as a signal peptide directing secretion. Residues 28–84 (GSWEPVDINDPHVQELGRWAVAEEDRGVAAGGLTFERVTDGEKQVVAGVNYRLTLEA) form the Cystatin domain. The Secondary area of contact signature appears at 71–75 (QVVAG).

The protein belongs to the cystatin family. Phytocystatin subfamily.

Its subcellular location is the secreted. Its function is as follows. Specific inhibitor of cysteine proteinases. Probably involved in the regulation of endogenous processes and in defense against pests and pathogens. This is Putative cysteine proteinase inhibitor 7 from Oryza sativa subsp. japonica (Rice).